Reading from the N-terminus, the 670-residue chain is RxLR effector protein PSR2 (670 aa).

The first 17 residues, 1–17 (MRLQCVVLFAALTLVAA), serve as a signal peptide directing secretion. The RxLR-dEER signature appears at 39 to 54 (RLLRPGNPAGKEDEER). The N-linked (GlcNAc...) asparagine glycan is linked to asparagine 57. One copy of the WY1 repeat lies at 79–126 (KLLKWADAKKPPETVFTRLRLDKTGTQLFDNTDFPVWAAYTRSVAQTD). Residues 79-670 (KLLKWADAKK…YSAKFKVRWG (592 aa)) form a 7 X 93 AA tandem repeats region. The LWY2 repeat unit spans residues 127-217 (SEASAVMLKT…NYMKLSNKEN (91 aa)). Residues 218–308 (PKAQTTLIAT…KYINYYNKEN (91 aa)) form an LWY3 repeat. One copy of the LWY4 repeat lies at 309–399 (PDEKTTVLAK…KYTENFNLNK (91 aa)). Residues 400–492 (EINEQVTAIQ…KFLEKYNTAN (93 aa)) form an LWY5 repeat. An LWY6 repeat occupies 493–583 (PGKEQTMISG…KYLNAFNDKA (91 aa)). The LWY7 repeat unit spans residues 584-670 (PVKKALMIDT…YSAKFKVRWG (87 aa)).

The protein belongs to the RxLR effector family. In terms of assembly, interacts with host dsRNA-binding protein DRB4.

The protein localises to the secreted. It is found in the host cell. Functionally, secreted effector that possesses RNA silencing suppression activity by inhibiting the biogenesis of small RNAs in the host plant to promote enhanced susceptibility of host to the pathogen during infection. Interferes with secondary siRNA production by associating with host dsRNA-binding protein DRB4. Inhibits the host salicylic acid pathway during infection. This Phytophthora sojae (Soybean stem and root rot agent) protein is RxLR effector protein PSR2.